The following is a 65-amino-acid chain: pH-response transcription factor pacC/RIM101 (65 aa).

The C2H2-type 1 zinc finger occupies 16–40 (LTCQWNSCRTTTVKRDHITSHIRVH). The segment at 46-65 (HKCEFCGKSFKRPQDLKKHV) adopts a C2H2-type 2; degenerate zinc-finger fold.

This sequence belongs to the pacC/RIM101 family.

Its subcellular location is the nucleus. In terms of biological role, transcription factor that mediates regulation of both acid- and alkaline-expressed genes in response to ambient pH. At alkaline ambient pH, activates transcription of alkaline-expressed genes (including pac1 itself) and represses transcription of acid-expressed genes. This Colletotrichum gloeosporioides (Anthracnose fungus) protein is pH-response transcription factor pacC/RIM101 (pac1).